The primary structure comprises 1150 residues: ATP-dependent helicase/deoxyribonuclease subunit B (1150 aa).

8–15 (GRAGSGKS) is an ATP binding site. The [4Fe-4S] cluster site is built by Cys786, Cys1106, Cys1109, and Cys1115.

The protein belongs to the helicase family. AddB/RexB type 1 subfamily. In terms of assembly, heterodimer of AddA and AddB. The cofactor is Mg(2+). [4Fe-4S] cluster serves as cofactor.

Its function is as follows. The heterodimer acts as both an ATP-dependent DNA helicase and an ATP-dependent, dual-direction single-stranded exonuclease. Recognizes the chi site generating a DNA molecule suitable for the initiation of homologous recombination. The AddB subunit has 5' -&gt; 3' nuclease activity but not helicase activity. This chain is ATP-dependent helicase/deoxyribonuclease subunit B, found in Clostridium botulinum (strain Hall / ATCC 3502 / NCTC 13319 / Type A).